Here is a 186-residue protein sequence, read N- to C-terminus: Large ribosomal subunit protein eL18B (186 aa).

N6,N6,N6-trimethyllysine is present on K50. A Glycyl lysine isopeptide (Lys-Gly) (interchain with G-Cter in ubiquitin) cross-link involves residue K116.

It belongs to the eukaryotic ribosomal protein eL18 family. As to quaternary structure, component of the large ribosomal subunit (LSU). Mature yeast ribosomes consist of a small (40S) and a large (60S) subunit. The 40S small subunit contains 1 molecule of ribosomal RNA (18S rRNA) and 33 different proteins (encoded by 57 genes). The large 60S subunit contains 3 rRNA molecules (25S, 5.8S and 5S rRNA) and 46 different proteins (encoded by 81 genes). eL18 interacts with NAP1.

Its subcellular location is the cytoplasm. In terms of biological role, component of the ribosome, a large ribonucleoprotein complex responsible for the synthesis of proteins in the cell. The small ribosomal subunit (SSU) binds messenger RNAs (mRNAs) and translates the encoded message by selecting cognate aminoacyl-transfer RNA (tRNA) molecules. The large subunit (LSU) contains the ribosomal catalytic site termed the peptidyl transferase center (PTC), which catalyzes the formation of peptide bonds, thereby polymerizing the amino acids delivered by tRNAs into a polypeptide chain. The nascent polypeptides leave the ribosome through a tunnel in the LSU and interact with protein factors that function in enzymatic processing, targeting, and the membrane insertion of nascent chains at the exit of the ribosomal tunnel. The sequence is that of Large ribosomal subunit protein eL18B from Saccharomyces cerevisiae (strain ATCC 204508 / S288c) (Baker's yeast).